Here is a 181-residue protein sequence, read N- to C-terminus: NADH-quinone oxidoreductase subunit B (181 aa).

Residues Cys45, Cys46, Cys111, and Cys140 each contribute to the [4Fe-4S] cluster site.

The protein belongs to the complex I 20 kDa subunit family. NDH-1 is composed of 14 different subunits. Subunits NuoB, C, D, E, F, and G constitute the peripheral sector of the complex. It depends on [4Fe-4S] cluster as a cofactor.

Its subcellular location is the cell inner membrane. It catalyses the reaction a quinone + NADH + 5 H(+)(in) = a quinol + NAD(+) + 4 H(+)(out). Its function is as follows. NDH-1 shuttles electrons from NADH, via FMN and iron-sulfur (Fe-S) centers, to quinones in the respiratory chain. The immediate electron acceptor for the enzyme in this species is believed to be a menaquinone. Couples the redox reaction to proton translocation (for every two electrons transferred, four hydrogen ions are translocated across the cytoplasmic membrane), and thus conserves the redox energy in a proton gradient. The chain is NADH-quinone oxidoreductase subunit B from Flavobacterium psychrophilum (strain ATCC 49511 / DSM 21280 / CIP 103535 / JIP02/86).